Here is a 194-residue protein sequence, read N- to C-terminus: uncharacterized protein (194 aa).

Residues 62-93 are disordered; it reads GGAGRRTSKAQRVHPQPSHQRQPPPPQHPGPY.

In terms of tissue distribution, expressed most abundantly in the brain at protein level. Present in cortex, cerebellum and midbrain. Found in neurons. Elevated expressions detected in Alzheimer brain samples. Also expressed in testis.

It localises to the cytoplasm. This is an uncharacterized protein from Homo sapiens (Human).